We begin with the raw amino-acid sequence, 315 residues long: 4-hydroxy-3-methylbut-2-enyl diphosphate reductase (315 aa).

Position 12 (Cys-12) interacts with [4Fe-4S] cluster. His-41 and His-74 together coordinate (2E)-4-hydroxy-3-methylbut-2-enyl diphosphate. His-41 and His-74 together coordinate dimethylallyl diphosphate. Residues His-41 and His-74 each contribute to the isopentenyl diphosphate site. Cys-96 contacts [4Fe-4S] cluster. His-124 lines the (2E)-4-hydroxy-3-methylbut-2-enyl diphosphate pocket. Position 124 (His-124) interacts with dimethylallyl diphosphate. Isopentenyl diphosphate is bound at residue His-124. Glu-126 serves as the catalytic Proton donor. Thr-168 serves as a coordination point for (2E)-4-hydroxy-3-methylbut-2-enyl diphosphate. Cys-198 contacts [4Fe-4S] cluster. Residues Ser-226, Ser-227, Asn-228, and Ser-270 each contribute to the (2E)-4-hydroxy-3-methylbut-2-enyl diphosphate site. Residues Ser-226, Ser-227, Asn-228, and Ser-270 each coordinate dimethylallyl diphosphate. 4 residues coordinate isopentenyl diphosphate: Ser-226, Ser-227, Asn-228, and Ser-270.

It belongs to the IspH family. The cofactor is [4Fe-4S] cluster.

It catalyses the reaction isopentenyl diphosphate + 2 oxidized [2Fe-2S]-[ferredoxin] + H2O = (2E)-4-hydroxy-3-methylbut-2-enyl diphosphate + 2 reduced [2Fe-2S]-[ferredoxin] + 2 H(+). It carries out the reaction dimethylallyl diphosphate + 2 oxidized [2Fe-2S]-[ferredoxin] + H2O = (2E)-4-hydroxy-3-methylbut-2-enyl diphosphate + 2 reduced [2Fe-2S]-[ferredoxin] + 2 H(+). Its pathway is isoprenoid biosynthesis; dimethylallyl diphosphate biosynthesis; dimethylallyl diphosphate from (2E)-4-hydroxy-3-methylbutenyl diphosphate: step 1/1. It participates in isoprenoid biosynthesis; isopentenyl diphosphate biosynthesis via DXP pathway; isopentenyl diphosphate from 1-deoxy-D-xylulose 5-phosphate: step 6/6. Functionally, catalyzes the conversion of 1-hydroxy-2-methyl-2-(E)-butenyl 4-diphosphate (HMBPP) into a mixture of isopentenyl diphosphate (IPP) and dimethylallyl diphosphate (DMAPP). Acts in the terminal step of the DOXP/MEP pathway for isoprenoid precursor biosynthesis. This Pseudomonas syringae pv. syringae (strain B728a) protein is 4-hydroxy-3-methylbut-2-enyl diphosphate reductase.